We begin with the raw amino-acid sequence, 223 residues long: Ras-related protein Rab-37 (223 aa).

Low complexity predominate over residues 1 to 13 (MTGTPGAATAGDG). The interval 1–22 (MTGTPGAATAGDGEAPERSPPF) is disordered. Residue Thr2 is modified to N-acetylthreonine. 8 residues coordinate GTP: Ser38, Gly39, Val40, Gly41, Lys42, Thr43, Cys44, and Thr62. Thr43 serves as a coordination point for Mg(2+). 2 consecutive short sequence motifs (switch) follow at residues 52-67 (GAFL…GIDS) and 85-102 (DTAG…YYRD). Mg(2+) contacts are provided by Thr62 and Asp85. GTP is bound by residues Gly88, Asn143, Lys144, Asp146, Ser173, Ala174, and Lys175. 2 S-geranylgeranyl cysteine lipidation sites follow: Cys219 and Cys220. The residue at position 220 (Cys220) is a Cysteine methyl ester. Residues 221–223 (SFV) constitute a propeptide, removed in mature form.

Belongs to the small GTPase superfamily. Rab family. Interacts with RIMS1. Interacts (in GDP-bound form) with RPGR, RPGR functions as guanine exchange factor (GEF). Mg(2+) is required as a cofactor. As to expression, expressed in the retina (at protein level). Specifically expressed in the bone marrow mast cells.

The protein resides in the cytoplasmic vesicle. The protein localises to the cell projection. It localises to the cilium. It carries out the reaction GTP + H2O = GDP + phosphate + H(+). With respect to regulation, regulated by guanine nucleotide exchange factors (GEFs) including RPGR which promote the exchange of bound GDP for free GTP. Regulated by GTPase activating proteins (GAPs) which increase the GTP hydrolysis activity. Inhibited by GDP dissociation inhibitors (GDIs). Functionally, the small GTPases Rab are key regulators of intracellular membrane trafficking, from the formation of transport vesicles to their fusion with membranes. Rabs cycle between an inactive GDP-bound form and an active GTP-bound form that is able to recruit to membranes different sets of downstream effectors directly responsible for vesicle formation, movement, tethering and fusion. Acts as an organizer for autophagosome biogenesis in a GTP-dependent manner. Involved in retinal homeostasis by autophagy regulation. This Mus musculus (Mouse) protein is Ras-related protein Rab-37.